A 294-amino-acid chain; its full sequence is Diaminopimelate epimerase (294 aa).

Residues Asn-11 and Asn-78 each coordinate substrate. The active-site Proton donor is Cys-87. Residues 88 to 89 (GN), Asn-167, Asn-203, and 221 to 222 (ER) each bind substrate. Cys-230 acts as the Proton acceptor in catalysis. 231–232 (GT) lines the substrate pocket.

Belongs to the diaminopimelate epimerase family. As to quaternary structure, homodimer.

It localises to the cytoplasm. The enzyme catalyses (2S,6S)-2,6-diaminopimelate = meso-2,6-diaminopimelate. Its pathway is amino-acid biosynthesis; L-lysine biosynthesis via DAP pathway; DL-2,6-diaminopimelate from LL-2,6-diaminopimelate: step 1/1. Catalyzes the stereoinversion of LL-2,6-diaminopimelate (L,L-DAP) to meso-diaminopimelate (meso-DAP), a precursor of L-lysine and an essential component of the bacterial peptidoglycan. This is Diaminopimelate epimerase from Mycobacterium avium (strain 104).